The sequence spans 242 residues: 7-cyano-7-deazaguanine synthase (242 aa).

14 to 24 (FSGGQDSATCL) is a binding site for ATP. Zn(2+) is bound by residues cysteine 202, cysteine 217, cysteine 220, and cysteine 223.

The protein belongs to the QueC family. Zn(2+) serves as cofactor.

The enzyme catalyses 7-carboxy-7-deazaguanine + NH4(+) + ATP = 7-cyano-7-deazaguanine + ADP + phosphate + H2O + H(+). It functions in the pathway purine metabolism; 7-cyano-7-deazaguanine biosynthesis. In terms of biological role, catalyzes the ATP-dependent conversion of 7-carboxy-7-deazaguanine (CDG) to 7-cyano-7-deazaguanine (preQ(0)). The chain is 7-cyano-7-deazaguanine synthase from Rhodopseudomonas palustris (strain BisA53).